Here is a 198-residue protein sequence, read N- to C-terminus: Pyridoxal 5'-phosphate synthase subunit PdxT (198 aa).

L-glutamine is bound at residue 49-51 (GES). Catalysis depends on Cys-81, which acts as the Nucleophile. Residues Arg-113 and 141–142 (IR) contribute to the L-glutamine site. Active-site charge relay system residues include His-177 and Glu-179.

The protein belongs to the glutaminase PdxT/SNO family. In the presence of PdxS, forms a dodecamer of heterodimers. Only shows activity in the heterodimer.

It carries out the reaction aldehydo-D-ribose 5-phosphate + D-glyceraldehyde 3-phosphate + L-glutamine = pyridoxal 5'-phosphate + L-glutamate + phosphate + 3 H2O + H(+). The enzyme catalyses L-glutamine + H2O = L-glutamate + NH4(+). Its pathway is cofactor biosynthesis; pyridoxal 5'-phosphate biosynthesis. Its function is as follows. Catalyzes the hydrolysis of glutamine to glutamate and ammonia as part of the biosynthesis of pyridoxal 5'-phosphate. The resulting ammonia molecule is channeled to the active site of PdxS. This Mycobacterium tuberculosis (strain ATCC 25177 / H37Ra) protein is Pyridoxal 5'-phosphate synthase subunit PdxT.